The primary structure comprises 162 residues: Transcription antitermination protein RfaH (162 aa).

It belongs to the RfaH family. As to quaternary structure, interacts with both the nontemplate DNA and the RNA polymerase (RNAP).

Enhances distal genes transcription elongation in a specialized subset of operons that encode extracytoplasmic components. RfaH is recruited into a multi-component RNA polymerase complex by the ops element, which is a short conserved DNA sequence located downstream of the main promoter of these operons. Once bound, RfaH suppresses pausing and inhibits Rho-dependent and intrinsic termination at a subset of sites. Termination signals are bypassed, which allows complete synthesis of long RNA chains. Also negatively controls expression and surface presentation of AG43 and possibly another AG43-independent factor that mediates cell-cell interactions and biofilm formation,. The polypeptide is Transcription antitermination protein RfaH (Escherichia coli O6:K15:H31 (strain 536 / UPEC)).